We begin with the raw amino-acid sequence, 255 residues long: Acetylglutamate kinase (255 aa).

Substrate-binding positions include 40 to 41, Arg-62, and Asn-157; that span reads GG.

It belongs to the acetylglutamate kinase family. ArgB subfamily.

It is found in the cytoplasm. The enzyme catalyses N-acetyl-L-glutamate + ATP = N-acetyl-L-glutamyl 5-phosphate + ADP. The protein operates within amino-acid biosynthesis; L-arginine biosynthesis; N(2)-acetyl-L-ornithine from L-glutamate: step 2/4. Functionally, catalyzes the ATP-dependent phosphorylation of N-acetyl-L-glutamate. This chain is Acetylglutamate kinase, found in Parabacteroides distasonis (strain ATCC 8503 / DSM 20701 / CIP 104284 / JCM 5825 / NCTC 11152).